Reading from the N-terminus, the 132-residue chain is ER membrane protein complex subunit 5 (132 aa).

Topologically, residues Met-1–Ser-3 are cytoplasmic. A helical transmembrane segment spans residues Ser-4–Phe-22. Residues Ser-23–Ile-43 lie on the Lumenal side of the membrane. Residues Asp-44–Ile-63 form a helical membrane-spanning segment. Residues Ala-64–Arg-132 are Cytoplasmic-facing.

It belongs to the membrane magnesium transporter (TC 1.A.67) family. Component of the ER membrane protein complex (EMC).

It is found in the endoplasmic reticulum membrane. The protein localises to the golgi apparatus membrane. Its subcellular location is the early endosome membrane. In terms of biological role, part of the endoplasmic reticulum membrane protein complex (EMC) that enables the energy-independent insertion into endoplasmic reticulum membranes of newly synthesized membrane proteins. Preferentially accommodates proteins with transmembrane domains that are weakly hydrophobic or contain destabilizing features such as charged and aromatic residues. Involved in the cotranslational insertion of multi-pass membrane proteins in which stop-transfer membrane-anchor sequences become ER membrane spanning helices. It is also required for the post-translational insertion of tail-anchored/TA proteins in endoplasmic reticulum membranes. By mediating the proper cotranslational insertion of N-terminal transmembrane domains in an N-exo topology, with translocated N-terminus in the lumen of the ER, controls the topology of multi-pass membrane proteins like the G protein-coupled receptors. By regulating the insertion of various proteins in membranes, it is indirectly involved in many cellular processes. May be involved in Mg(2+) transport. The polypeptide is ER membrane protein complex subunit 5 (Xenopus tropicalis (Western clawed frog)).